Consider the following 124-residue polypeptide: Vitelline membrane protein Vm32E (124 aa).

An N-terminal signal peptide occupies residues 1-19 (MKTVAFLAVVVLFAAFACA). Residues 42–81 (SVPAPPCPKNYLFSCQPNLVPAPCAQQAAPAAYGSAGAYT) form the VM domain.

Belongs to the vitelline membrane family.

It localises to the secreted. Its function is as follows. Major early eggshell protein. This Drosophila pseudoobscura pseudoobscura (Fruit fly) protein is Vitelline membrane protein Vm32E.